The primary structure comprises 1226 residues: Methionine synthase (1226 aa).

One can recognise a Hcy-binding domain in the interval arginine 6–valine 326. Residues cysteine 248, cysteine 311, and cysteine 312 each coordinate Zn(2+). The Pterin-binding domain maps to phenylalanine 357 to glutamate 618. The B12-binding N-terminal domain maps to serine 651 to serine 745. Methylcob(III)alamin contacts are provided by residues glutamate 695, glycine 757 to aspartate 761, histidine 760, serine 805, threonine 809, and alanine 861. The 136-residue stretch at asparagine 747–glutamate 882 folds into the B12-binding domain. The 329-residue stretch at lysine 898 to glycine 1226 folds into the AdoMet activation domain. S-adenosyl-L-methionine-binding positions include aspartate 948, arginine 1136, and tyrosine 1191–phenylalanine 1192.

The protein belongs to the vitamin-B12 dependent methionine synthase family. Requires methylcob(III)alamin as cofactor. It depends on Zn(2+) as a cofactor.

The enzyme catalyses (6S)-5-methyl-5,6,7,8-tetrahydrofolate + L-homocysteine = (6S)-5,6,7,8-tetrahydrofolate + L-methionine. Its pathway is amino-acid biosynthesis; L-methionine biosynthesis via de novo pathway; L-methionine from L-homocysteine (MetH route): step 1/1. Its function is as follows. Catalyzes the transfer of a methyl group from methyl-cobalamin to homocysteine, yielding enzyme-bound cob(I)alamin and methionine. Subsequently, remethylates the cofactor using methyltetrahydrofolate. The chain is Methionine synthase (metH) from Vibrio vulnificus (strain YJ016).